Here is a 352-residue protein sequence, read N- to C-terminus: Protein O-mannose kinase (352 aa).

Topologically, residues 1–16 are cytoplasmic; it reads MERKPSVCRKSGSWNC. Residues 17–37 traverse the membrane as a helical; Signal-anchor for type II membrane protein segment; that stretch reads LLVLFLLLLFTVVSVNFLLYM. The Lumenal segment spans residues 38 to 352; sequence YIDQMYAPSR…MAVAETREML (315 aa). Residues 82-352 form the Protein kinase domain; sequence VRKLKLVGEG…MAVAETREML (271 aa).

It belongs to the protein kinase superfamily. Ser/Thr protein kinase family. STKL subfamily.

The protein resides in the endoplasmic reticulum membrane. The enzyme catalyses 3-O-[beta-D-GalNAc-(1-&gt;3)-beta-D-GlcNAc-(1-&gt;4)-alpha-D-Man]-L-Thr-[protein] + ATP = 3-O-[beta-D-GalNAc-(1-&gt;3)-beta-D-GlcNAc-(1-&gt;4)-(O-6-P-alpha-D-Man)]-Thr-[protein] + ADP + H(+). Functionally, protein O-mannose kinase that specifically mediates phosphorylation at the 6-position of an O-mannose of the trisaccharide (N-acetylgalactosamine (GalNAc)-beta-1,3-N-acetylglucosamine (GlcNAc)-beta-1,4-mannose) to generate phosphorylated O-mannosyl trisaccharide (N-acetylgalactosamine-beta-1,3-N-acetylglucosamine-beta-1,4-(phosphate-6-)mannose). Phosphorylated O-mannosyl trisaccharide is a carbohydrate structure present in alpha-dystroglycan (dag1), which is required for binding laminin G-like domain-containing extracellular proteins with high affinity. Only shows kinase activity when the GalNAc-beta-3-GlcNAc-beta-terminus is linked to the 4-position of O-mannose, suggesting that this disaccharide serves as the substrate recognition motif. This is Protein O-mannose kinase (pomk) from Xenopus laevis (African clawed frog).